Consider the following 703-residue polypeptide: Calpain-8 (703 aa).

The Calpain catalytic domain maps to 45–344; it reads LFKDPEFPAC…FSRLEICNLS (300 aa). Catalysis depends on residues Cys105, His262, and Asn286. Positions 355–512 are domain III; that stretch reads KWNLVLFNGR…VFSEKKAQAL (158 aa). The tract at residues 513–531 is linker; the sequence is EIGDAVPGDPHEPHPRDMD. 4 EF-hand domains span residues 531 to 566, 575 to 610, 605 to 640, and 670 to 703; these read DGED…LLSK, FNIN…ICKY, LKIC…AGFT, and IRLE…RALV. A domain IV region spans residues 532–703; it reads GEDEHFWSLS…LAEWLCRALV (172 aa). Asp588, Asp590, Thr592, Ser594, Glu599, Asp618, Ser620, Thr624, and Glu629 together coordinate Ca(2+).

The protein belongs to the peptidase C2 family. In terms of assembly, monomer and homooligomer. Interacts with COPS1/GPS1, COPB1, EYA2, NME2, NME4 and TOMM70. It depends on Ca(2+) as a cofactor. Post-translationally, undergoes autolytic cleavage between Ala-5 and Ala-6 which gives rise to fragments extending from Ala-6 to the C-terminus, Ala-6 to the EF-hand 2 domain and from Ala-6 to the beginning of domain III. In terms of tissue distribution, predominantly expressed in the stomach. Localizes strictly to the surface mucus cells in the gastric epithelium and the mucus-secreting goblet cells in the duodenum.

It localises to the cytoplasm. Its subcellular location is the golgi apparatus. The enzyme catalyses Broad endopeptidase specificity.. Its activity is regulated as follows. The concentration of calcium for half-maximal activity is 0.3 mM. Inhibited by calpastatin and calpeptin. In terms of biological role, calcium-regulated non-lysosomal thiol-protease. Involved in membrane trafficking in the gastric surface mucus cells (pit cells) and may involve the membrane trafficking of mucus cells via interactions with coat protein. Proteolytically cleaves the beta-subunit of coatomer complex. The sequence is that of Calpain-8 (Capn8) from Mus musculus (Mouse).